A 310-amino-acid chain; its full sequence is Uracil phosphoribosyltransferase homolog (310 aa).

2 disordered regions span residues 1–27 and 62–89; these read MASE…PSPE and SERD…GNYD. Over residues 16–25 the composition is skewed to polar residues; sequence RQVNSTSSPS. Serine 25 is subject to Phosphoserine. GTP-binding positions include arginine 134, arginine 143, and 177–180; that span reads EKGN. 5-phospho-alpha-D-ribose 1-diphosphate is bound at residue arginine 187. The GTP site is built by arginine 204 and arginine 233. Residue 239-247 participates in 5-phospho-alpha-D-ribose 1-diphosphate binding; it reads YPILSTGNT. Position 300-302 (300-302) interacts with uracil; it reads THF.

The protein belongs to the UPRTase family.

The protein resides in the cytoplasm. The protein localises to the nucleus. The polypeptide is Uracil phosphoribosyltransferase homolog (Uprt) (Mus musculus (Mouse)).